The primary structure comprises 539 residues: Chloride channel CLIC-like protein 1 (539 aa).

A signal peptide spans 1–18; the sequence is MLCRLLLCECLLLITGYA. Topologically, residues 19–184 are lumenal; that stretch reads HDDDWIDPTD…EDYFGVDPYN (166 aa). Residues 41-61 are disordered; that stretch reads KSQVRSGTSEKKEVSPDSSEA. A helical transmembrane segment spans residues 185-205; the sequence is VFMVLLCLLCLVVLVATELWT. The Cytoplasmic portion of the chain corresponds to 206 to 215; the sequence is YVRWYTQMKR. The helical transmembrane segment at 216-236 threads the bilayer; the sequence is IFIISFLLSLAWNWIYLYKMA. Residues 237 to 329 are Lumenal-facing; the sequence is FAQHQANIAG…GEFIKALMKE (93 aa). The chain crosses the membrane as a helical span at residues 330 to 350; that stretch reads IPVLLQIPVLAILALAVLSFC. Residues 351 to 539 lie on the Cytoplasmic side of the membrane; it reads YGAGRSVPML…GTEPVSSPCG (189 aa). The interval 361–410 is disordered; sequence RHFGGPDREPPRALEPDDRRRQKGLDYRLHGGAGDADFSYRGPAGSIEQG. The span at 364–389 shows a compositional bias: basic and acidic residues; that stretch reads GGPDREPPRALEPDDRRRQKGLDYRL. Ser-429, Ser-433, and Ser-459 each carry phosphoserine. The tract at residues 444-539 is disordered; the sequence is DTEAQEHPEV…GTEPVSSPCG (96 aa). The span at 475-485 shows a compositional bias: polar residues; the sequence is STPTEYSQSAK. Phosphothreonine is present on Thr-476. Phosphoserine is present on residues Ser-498, Ser-513, and Ser-521. Low complexity predominate over residues 512–521; that stretch reads CSPPGGCPPS.

It belongs to the chloride channel MCLC family. Homomultimers. Interacts with mitochondrial protein PIGBOS1 (via C-terminus); the interaction occurs at the mitochondria-associated endoplasmic reticulum (ER) membrane, a zone of contact between the ER and mitochondrial membranes, but does not appear to play a role in ER-mitochondria tethering and is not affected by ER stress. Interacts with CALR. Expressed in cerebellum (at protein level).

Its subcellular location is the endoplasmic reticulum membrane. The catalysed reaction is chloride(in) = chloride(out). It catalyses the reaction bromide(in) = bromide(out). The enzyme catalyses nitrate(in) = nitrate(out). It carries out the reaction fluoride(in) = fluoride(out). Activated by membrane phosphatidylinositol 4,5-bisphosphate (PI(4,5)P2, PIP2). Inhibited by lumenal Ca(2+). Its function is as follows. Anion-selective channel with Ca(2+)-dependent and voltage-independent gating. Permeable to small monovalent anions with selectivity for bromide &gt; chloride &gt; nitrate &gt; fluoride. Operates in the endoplasmic reticulum (ER) membrane where it mediates chloride efflux to compensate for the loss of positive charges from the ER lumen upon Ca(2+) release. Contributes to the maintenance of ER Ca(2+) pools and activation of unfolded protein response to prevent accumulation of misfolded proteins in the ER lumen. Particularly involved in ER homeostasis mechanisms underlying motor neurons and retinal photoreceptors survival. In Mus musculus (Mouse), this protein is Chloride channel CLIC-like protein 1.